A 495-amino-acid polypeptide reads, in one-letter code: ATP synthase subunit beta, chloroplastic (495 aa).

172–179 is a binding site for ATP; it reads GGAGVGKT.

Belongs to the ATPase alpha/beta chains family. In terms of assembly, F-type ATPases have 2 components, CF(1) - the catalytic core - and CF(0) - the membrane proton channel. CF(1) has five subunits: alpha(3), beta(3), gamma(1), delta(1), epsilon(1). CF(0) has four main subunits: a(1), b(1), b'(1) and c(9-12).

The protein localises to the plastid. The protein resides in the chloroplast thylakoid membrane. The catalysed reaction is ATP + H2O + 4 H(+)(in) = ADP + phosphate + 5 H(+)(out). Its function is as follows. Produces ATP from ADP in the presence of a proton gradient across the membrane. The catalytic sites are hosted primarily by the beta subunits. The protein is ATP synthase subunit beta, chloroplastic of Scilla siberica (Siberian squill).